Reading from the N-terminus, the 114-residue chain is Protein S40-2 (114 aa).

The segment at 23–50 is disordered; the sequence is RYTKLYNSRNDEKKGTRRHETAEKTSPV. A compositionally biased stretch (basic and acidic residues) spans 31–45; it reads RNDEKKGTRRHETAE.

It belongs to the senescence regulator S40 family.

The protein localises to the cytoplasm. The sequence is that of Protein S40-2 from Arabidopsis thaliana (Mouse-ear cress).